We begin with the raw amino-acid sequence, 200 residues long: Imidazoleglycerol-phosphate dehydratase (200 aa).

Residues Glu13, 39–47, 68–72, Arg94, and Arg116 contribute to the substrate site; these read HMLTLLTFH and HHLIE. Residues His39, His68, His69, and Glu72 each contribute to the Mn(2+) site. Mn(2+)-binding residues include Glu141, His165, His166, and Glu169. Substrate is bound by residues 165 to 173 and 195 to 197; these read HHIIEGMFK and SSK.

The protein belongs to the imidazoleglycerol-phosphate dehydratase family. The cofactor is Mn(2+).

Its subcellular location is the cytoplasm. It carries out the reaction D-erythro-1-(imidazol-4-yl)glycerol 3-phosphate = 3-(imidazol-4-yl)-2-oxopropyl phosphate + H2O. Its pathway is amino-acid biosynthesis; L-histidine biosynthesis; L-histidine from 5-phospho-alpha-D-ribose 1-diphosphate: step 6/9. In Lactococcus lactis subsp. lactis (strain IL1403) (Streptococcus lactis), this protein is Imidazoleglycerol-phosphate dehydratase (hisB).